The chain runs to 193 residues: Partner of Y14 and mago (193 aa).

2 disordered regions span residues 1 to 27 (MSTP…DGTW) and 118 to 142 (IQEP…TKRL). Residues 122 to 137 (TLPSQSVPTESISQSD) show a composition bias toward polar residues. The stretch at 139–192 (TKRLKNLRKKLREIEFLEEKIKAGLLKSPDKDQKEKMSKKNEILNEIDILKNSI) forms a coiled coil.

The protein belongs to the pym family. In terms of assembly, interacts (via N-terminus) with mago and tsu/Y14; the interaction is direct.

The protein localises to the cytoplasm. It localises to the nucleus. Its function is as follows. Regulator of the exon junction complex (EJC), a multiprotein complex that associates immediately upstream of the exon-exon junction on mRNAs and serves as a positional landmarks for the intron exon structure of genes and directs post-transcriptional processes in the cytoplasm such as mRNA export, nonsense-mediated mRNA decay (NMD) or translation. The chain is Partner of Y14 and mago from Bombyx mori (Silk moth).